The chain runs to 412 residues: Transcription termination factor 3, mitochondrial (412 aa).

Residues 1–67 (MALLAQQLPR…IKTYRTLFWN (67 aa)) constitute a mitochondrion transit peptide.

This sequence belongs to the mTERF family.

The protein localises to the mitochondrion. Its function is as follows. Binds promoter DNA and regulates initiation of transcription. Required for normal mitochondrial transcription and translation, and for normal assembly of mitochondrial respiratory complexes. Required for normal mitochondrial function. Maintains 16S rRNA levels and functions in mitochondrial ribosome assembly by regulating the biogenesis of the 39S ribosomal subunit. This chain is Transcription termination factor 3, mitochondrial (Mterf3), found in Mus musculus (Mouse).